The primary structure comprises 852 residues: Beta-galactosidase 8 (852 aa).

An N-terminal signal peptide occupies residues M1 to A29. The N-linked (GlcNAc...) asparagine glycan is linked to N31. Catalysis depends on E188, which acts as the Proton donor. The active-site Nucleophile is E257. Residues N258, N475, N766, and N807 are each glycosylated (N-linked (GlcNAc...) asparagine). In terms of domain architecture, SUEL-type lectin spans N766 to S852.

It belongs to the glycosyl hydrolase 35 family. Expressed in roots, flowers and siliques.

The protein localises to the secreted. It localises to the extracellular space. The protein resides in the apoplast. It carries out the reaction Hydrolysis of terminal non-reducing beta-D-galactose residues in beta-D-galactosides.. This is Beta-galactosidase 8 (BGAL8) from Arabidopsis thaliana (Mouse-ear cress).